A 130-amino-acid chain; its full sequence is T-cell receptor alpha chain V region PHDS58 (130 aa).

The first 20 residues, Met-1–Ala-20, serve as a signal peptide directing secretion. Positions Gln-21–Gly-114 are v segment. A glycan (N-linked (GlcNAc...) asparagine) is linked at Asn-90. The interval Phe-115–Leu-130 is j segment.

This chain is T-cell receptor alpha chain V region PHDS58, found in Mus musculus (Mouse).